The chain runs to 85 residues: Large ribosomal subunit protein bL31B (85 aa).

The protein belongs to the bacterial ribosomal protein bL31 family. Type B subfamily. As to quaternary structure, part of the 50S ribosomal subunit.

The polypeptide is Large ribosomal subunit protein bL31B (Aliivibrio salmonicida (strain LFI1238) (Vibrio salmonicida (strain LFI1238))).